A 114-amino-acid polypeptide reads, in one-letter code: MSDDVALPLEFTEAAANKVKHLIADEDNPNLKLRVYITGGGCSGFQYGFTFDDQVNEGDMTIEKQGVGLVVDPMSLQYLVGGSVDYTEGLEGSRFIVTNPNAKSTCGCGSSFSV.

Residues C42, C106, and C108 each contribute to the iron-sulfur cluster site.

This sequence belongs to the HesB/IscA family. In terms of assembly, homodimer. Iron-sulfur cluster is required as a cofactor.

In terms of biological role, required for insertion of 4Fe-4S clusters for at least IspG. This Klebsiella pneumoniae subsp. pneumoniae (strain ATCC 700721 / MGH 78578) protein is Iron-sulfur cluster insertion protein ErpA.